The chain runs to 89 residues: Small ribosomal subunit protein uS15 (89 aa).

It belongs to the universal ribosomal protein uS15 family. As to quaternary structure, part of the 30S ribosomal subunit. Forms a bridge to the 50S subunit in the 70S ribosome, contacting the 23S rRNA.

One of the primary rRNA binding proteins, it binds directly to 16S rRNA where it helps nucleate assembly of the platform of the 30S subunit by binding and bridging several RNA helices of the 16S rRNA. In terms of biological role, forms an intersubunit bridge (bridge B4) with the 23S rRNA of the 50S subunit in the ribosome. The chain is Small ribosomal subunit protein uS15 from Pseudoalteromonas atlantica (strain T6c / ATCC BAA-1087).